The following is a 324-amino-acid chain: NADH-ubiquinone oxidoreductase chain 1 (324 aa).

The next 8 helical transmembrane spans lie at 9 to 29 (LINPLAYAVPVLIAVAFLTLV), 75 to 95 (ILFLTAPVLALILAMMLWAPM), 106 to 126 (LGILFIMAISSLAVYSILGSG), 146 to 166 (ISYEVSLGLILLSAVIFSGGY), 178 to 198 (TWLLLPLWPLAIMWFISTLAE), 212 to 232 (ELVSGFNVEYAAGPFALFFLA), 259 to 279 (ELMTISIATKTAMLSILFLWM), and 299 to 319 (FLPITLVLVLWHIALPIALAG).

Belongs to the complex I subunit 1 family. As to quaternary structure, core subunit of respiratory chain NADH dehydrogenase (Complex I) which is composed of 45 different subunits.

The protein localises to the mitochondrion inner membrane. It catalyses the reaction a ubiquinone + NADH + 5 H(+)(in) = a ubiquinol + NAD(+) + 4 H(+)(out). In terms of biological role, core subunit of the mitochondrial membrane respiratory chain NADH dehydrogenase (Complex I) which catalyzes electron transfer from NADH through the respiratory chain, using ubiquinone as an electron acceptor. Essential for the catalytic activity and assembly of complex I. The polypeptide is NADH-ubiquinone oxidoreductase chain 1 (mt-nd1) (Danio rerio (Zebrafish)).